The following is a 152-amino-acid chain: Cell division protein SepF (152 aa).

The interval 21-56 is disordered; that stretch reads EYIETEQDHPEEHEQQKDKQPAYAQKPQGKQNVVSL. The span at 26-40 shows a compositional bias: basic and acidic residues; sequence EQDHPEEHEQQKDKQ.

It belongs to the SepF family. As to quaternary structure, homodimer. Interacts with FtsZ.

It is found in the cytoplasm. Cell division protein that is part of the divisome complex and is recruited early to the Z-ring. Probably stimulates Z-ring formation, perhaps through the cross-linking of FtsZ protofilaments. Its function overlaps with FtsA. This chain is Cell division protein SepF, found in Bacillus velezensis (strain DSM 23117 / BGSC 10A6 / LMG 26770 / FZB42) (Bacillus amyloliquefaciens subsp. plantarum).